The following is a 180-amino-acid chain: Large ribosomal subunit protein uL5 (180 aa).

This sequence belongs to the universal ribosomal protein uL5 family. Part of the 50S ribosomal subunit; part of the 5S rRNA/L5/L18/L25 subcomplex. Contacts the 5S rRNA and the P site tRNA. Forms a bridge to the 30S subunit in the 70S ribosome.

Its function is as follows. This is one of the proteins that bind and probably mediate the attachment of the 5S RNA into the large ribosomal subunit, where it forms part of the central protuberance. In the 70S ribosome it contacts protein S13 of the 30S subunit (bridge B1b), connecting the 2 subunits; this bridge is implicated in subunit movement. Contacts the P site tRNA; the 5S rRNA and some of its associated proteins might help stabilize positioning of ribosome-bound tRNAs. In Xanthomonas oryzae pv. oryzae (strain MAFF 311018), this protein is Large ribosomal subunit protein uL5.